Here is a 127-residue protein sequence, read N- to C-terminus: MORF4 family-associated protein 1 (127 aa).

Residues 76-97 (ESALNHLQNPDDGAEGRGTKRC) form a disordered region. Residues 92 to 126 (RGTKRCEKAEEKAKEIAKMAEMLVELVRRIEKSES) are a coiled coil.

The protein belongs to the MORF4 family-associated protein family. Found in a complex composed of MORF4L1, MRFAP1 and RB1. Interacts via its N-terminus with MORF4L1. Interacts with CSTB and MORF4L2.

The protein resides in the nucleus. It localises to the cytoplasm. It is found in the perinuclear region. This chain is MORF4 family-associated protein 1, found in Bos taurus (Bovine).